Consider the following 505-residue polypeptide: Glutamate--cysteine ligase (505 aa).

The protein belongs to the glutamate--cysteine ligase type 1 family. Type 1 subfamily.

It carries out the reaction L-cysteine + L-glutamate + ATP = gamma-L-glutamyl-L-cysteine + ADP + phosphate + H(+). It functions in the pathway sulfur metabolism; glutathione biosynthesis; glutathione from L-cysteine and L-glutamate: step 1/2. The protein is Glutamate--cysteine ligase of Wigglesworthia glossinidia brevipalpis.